The sequence spans 243 residues: Uba3-binding protein but1 (243 aa).

The segment at 28 to 50 (KSTKKRRSSTKDEETRGMHPHIK) is disordered.

In terms of assembly, homodimer. Interacts with but2 and uba3.

It localises to the nucleus. Functionally, acts as a negative regulator of the NEDD8 pathway. Has a role in meiosis. The chain is Uba3-binding protein but1 (but1) from Schizosaccharomyces pombe (strain 972 / ATCC 24843) (Fission yeast).